A 251-amino-acid polypeptide reads, in one-letter code: Probable caffeoyl-CoA O-methyltransferase 3 (251 aa).

S-adenosyl-L-methionine is bound by residues threonine 61, aspartate 83, 85–86 (GV), serine 91, aspartate 109, and alanine 138. Aspartate 160 contributes to the a divalent metal cation binding site. Residue aspartate 162 participates in S-adenosyl-L-methionine binding. Positions 186 and 187 each coordinate a divalent metal cation.

This sequence belongs to the class I-like SAM-binding methyltransferase superfamily. Cation-dependent O-methyltransferase family. CCoAMT subfamily.

The catalysed reaction is (E)-caffeoyl-CoA + S-adenosyl-L-methionine = (E)-feruloyl-CoA + S-adenosyl-L-homocysteine + H(+). The protein is Probable caffeoyl-CoA O-methyltransferase 3 (omt1) of Dictyostelium discoideum (Social amoeba).